The sequence spans 130 residues: Small ribosomal subunit protein uS9 (130 aa).

It belongs to the universal ribosomal protein uS9 family.

This Vibrio vulnificus (strain CMCP6) protein is Small ribosomal subunit protein uS9.